The primary structure comprises 824 residues: Intraflagellar transport protein 88 homolog (824 aa).

Disordered regions lie at residues methionine 1 to aspartate 27 and alanine 111 to glutamate 134. TPR repeat units follow at residues tyrosine 196 to serine 229, glycine 232 to valine 265, isoleucine 271 to leucine 304, asparagine 415 to valine 448, serine 450 to asparagine 483, proline 484 to cysteine 517, threonine 518 to serine 551, alanine 552 to aspartate 585, serine 586 to asparagine 619, isoleucine 620 to glutamine 653, and valine 654 to asparagine 687. A compositionally biased stretch (basic and acidic residues) spans glutamate 721–arginine 731. The segment at glutamate 721 to glutamate 824 is disordered. Over residues aspartate 748 to serine 757 the composition is skewed to polar residues. Over residues glutamate 797 to aspartate 808 the composition is skewed to basic and acidic residues. The span at glutamate 809–glutamate 824 shows a compositional bias: acidic residues.

As to quaternary structure, component of the IFT complex B, at least composed of IFT20, IFT22, IFT25, IFT27, IFT46, IFT52, TRAF3IP1/IFT54, IFT57, IFT74, IFT80, IFT81, and IFT88. Interacts with IFT20, IFT22, IFT25, IFT27, IFT52, TRAF3IP1, IFT74, IFT80 and IFT81. Interacts with IFT172. Interacts with IFT57. Interacts with IFT46. Interacts with IFT70B. Interacts with C2CD3. Interacts with ENTR1 (via N-terminus). Interacts with LRRC56. Interacts with DZIP1. Interacts with CCDC38. Interacts with CCDC146. Interacts with CFAP53. As to expression, testis.

The protein resides in the cytoplasm. It is found in the cytoskeleton. Its subcellular location is the microtubule organizing center. It localises to the centrosome. The protein localises to the centriole. The protein resides in the cilium basal body. It is found in the cell projection. Its subcellular location is the cilium. It localises to the flagellum. Its function is as follows. Positively regulates primary cilium biogenesis. Also involved in autophagy since it is required for trafficking of ATG16L and the expansion of the autophagic compartment. In Mus musculus (Mouse), this protein is Intraflagellar transport protein 88 homolog (Ift88).